Reading from the N-terminus, the 189-residue chain is ECF RNA polymerase sigma-E factor (189 aa).

The binds RNAP core stretch occupies residues 1–153 (MAEQLTDQAL…TAITLRELEG (153 aa)). The interval 25-92 (LVSRYQNKVA…KNYLTAQGRR (68 aa)) is sigma-70 factor domain-2. Positions 48–61 (DVVQESFIKAYRSI) match the Polymerase core binding motif. Positions 129–180 (RIVFDTIHNLPEDLKTAITLRELEGLSYEDIAEIMDCPVGTVRSRIFRAREM) are sigma-70 factor domain-4. The segment at residues 156–175 (YEDIAEIMDCPVGTVRSRIF) is a DNA-binding region (H-T-H motif).

This sequence belongs to the sigma-70 factor family. ECF subfamily. As to quaternary structure, interacts transiently with the RNAP catalytic core formed by RpoA, RpoB, RpoC and RpoZ (2 alpha, 1 beta, 1 beta' and 1 omega subunit) to form the RNAP holoenzyme that can initiate transcription. Interacts 1:1 with anti-sigma-E factor RseA which prevents binding to RNAP catalytic core.

It localises to the cytoplasm. Its activity is regulated as follows. ECF sigma-E is held in an inactive form by its cognate anti-sigma factor (RseA) until released by regulated intramembrane proteolysis (RIP). RIP occurs when an extracytoplasmic signal (periplasmic stress and excess LPS) triggers a concerted proteolytic cascade to transmit information and elicit cellular responses. The anti-sigma factor RseA is an inner membrane protein, binding sigma-E in the cytoplasm and RseB in the periplasm. RseA is first cut extracytoplasmically (site-1 protease, S1P, by DegS), then within the membrane itself (site-2 protease, S2P, by RseP), while cytoplasmic proteases (predominantly ClpX-ClpP) finish degrading the regulatory protein, liberating sigma-E. Degradation of RseA requires 2 signals to activate DegS; an outer membrane protein (OMP) signal activates DegS, while an LPS signal causes release of RseB from RseA, freeing RseA to be cleaved. In terms of biological role, sigma factors are initiation factors that promote the attachment of RNA polymerase (RNAP) to specific initiation sites and are then released. Extracytoplasmic function (ECF) sigma-E controls the envelope stress response, responding to periplasmic protein stress, increased levels of periplasmic lipopolysaccharide (LPS) as well as heat shock and oxidative stress; it controls protein processing in the extracytoplasmic compartment. This is ECF RNA polymerase sigma-E factor (rpoE) from Haemophilus influenzae (strain ATCC 51907 / DSM 11121 / KW20 / Rd).